A 144-amino-acid chain; its full sequence is MIKPDGVSGNYTEEIKTIVVEAGFNIVKEMLTQLDKETASAFYEEHSSRSFFPHLVTYMTSGPVLVMVLEKRNAVSDWRDLIGPTDAEKAKISHPHSIRALCGKNSQKNCVHGSDSTSSAEREIKFFFKDVVSGDIATQQHDEL.

ATP-binding residues include K3, F51, R79, T85, R99, and N109. Residue H112 is the Pros-phosphohistidine intermediate of the active site.

Belongs to the NDK family.

It carries out the reaction a 2'-deoxyribonucleoside 5'-diphosphate + ATP = a 2'-deoxyribonucleoside 5'-triphosphate + ADP. The enzyme catalyses a ribonucleoside 5'-diphosphate + ATP = a ribonucleoside 5'-triphosphate + ADP. Involved in the synthesis of nucleoside triphosphates other than ATP. The ATP gamma phosphate is transferred to the NDP beta phosphate via a ping-pong mechanism, using a phosphorylated active-site intermediate. The protein is Probable nucleoside diphosphate kinase 5 of Arabidopsis thaliana (Mouse-ear cress).